The sequence spans 1434 residues: Receptor-type tyrosine-protein phosphatase U (1434 aa).

The signal sequence occupies residues 1-17; it reads MRSARALLLALALRVCA. The Extracellular portion of the chain corresponds to 18 to 748; it reads LDSETPSAGC…QHSEEMGLIL (731 aa). The MAM domain occupies 25-187; that stretch reads AGCTFEEDDD…ILLLNYPCSK (163 aa). N74 is a glycosylation site (N-linked (GlcNAc...) asparagine). The Ig-like C2-type domain maps to 189–274; sequence PHFSRLGDVE…TQSSRGSGVS (86 aa). Residues C209 and C263 are joined by a disulfide bond. Fibronectin type-III domains are found at residues 287–382, 385–483, 484–590, and 597–677; these read PIAP…CAEP, APKG…TDED, VPGG…SAPT, and PSPL…TEAK. N-linked (GlcNAc...) asparagine glycosylation occurs at N409. N684 carries an N-linked (GlcNAc...) asparagine glycan. Residues 749 to 769 traverse the membrane as a helical segment; sequence GICAGGLVVLIILLGAIIVVI. The Cytoplasmic portion of the chain corresponds to 770–1434; that stretch reads RKGKPVNMTK…LEYLESLETR (665 aa). Residues 824–839 are compositionally biased toward polar residues; sequence RGDQRSSVVNESSSLL. A disordered region spans residues 824–851; sequence RGDQRSSVVNESSSLLGGSPRRQCGRKG. 2 consecutive Tyrosine-protein phosphatase domains span residues 876-1132 and 1164-1427; these read KTAE…ILEA and LREE…ALEY. Substrate contacts are provided by residues E1041, 1073 to 1079, and Q1117; that span reads CSAGTGR. The active-site Phosphocysteine intermediate is the C1073. Residue C1368 is the Phosphocysteine intermediate of the active site.

It belongs to the protein-tyrosine phosphatase family. Receptor class 2B subfamily.

The protein resides in the cell junction. It is found in the cell membrane. The catalysed reaction is O-phospho-L-tyrosyl-[protein] + H2O = L-tyrosyl-[protein] + phosphate. Tyrosine-protein phosphatase which dephosphorylates CTNNB1. May function in cell proliferation and migration and play a role in the maintenance of epithelial integrity. This chain is Receptor-type tyrosine-protein phosphatase U (PTPRU), found in Gallus gallus (Chicken).